Consider the following 217-residue polypeptide: MITWYGHACFKVDNVLIDPFVPNPLCDLPYDEIMEGVEVIAVTHGHADHLGNAEELAKTYNVPVVTNHEISVYLSERGVCAEGMNIGGTIEINGAKLTMVKAEHSSDISPTISGGVAAGFIINDRVYHAGDTGLFGDMELIGEIYAPQIALLPIGGRYTMGIDEALVAIELIYPEIVIPMHYNTFPLIEVDVNEFVKKAEALGVEVIVPKIGEPLEL.

The protein belongs to the UPF0173 family.

This chain is UPF0173 metal-dependent hydrolase MJ1163, found in Methanocaldococcus jannaschii (strain ATCC 43067 / DSM 2661 / JAL-1 / JCM 10045 / NBRC 100440) (Methanococcus jannaschii).